We begin with the raw amino-acid sequence, 301 residues long: MRIAILSRNENLYSTQRLKEAGEARGHEVDIIDTLHCYMDITSSNPTVRYMGKVLPKYDAVIPRIGSSITFYGTAVVRQFEMMGTFCVNESVAISRSRDKLRSLQLLSRKGIGLPRTGFASKPDKIQDLIKNVGGAPLVIKLLEGTQGIGVVLAETNKAAESVIEAFMGLKANILVQEFIKEAGGADIRCFVVGDKVVAAMKRQAAEGEFRSNLHRGGVAQLVRLSKDERATALNAAKAMGLNLCGVDILQSNNGPVVMEVNSSPGLEGIEQATGKDVAGLIYEFIEKKAKPNANRTRGKG.

In terms of domain architecture, ATP-grasp spans 104–287 (LQLLSRKGIG…VAGLIYEFIE (184 aa)). ATP is bound by residues Lys-141, 178–179 (EF), Asp-187, and 211–213 (RSN). Mg(2+)-binding residues include Asp-248, Glu-260, and Asn-262. Mn(2+)-binding residues include Asp-248, Glu-260, and Asn-262.

It belongs to the RimK family. The cofactor is Mg(2+). Mn(2+) serves as cofactor.

The polypeptide is Probable alpha-L-glutamate ligase (Shewanella loihica (strain ATCC BAA-1088 / PV-4)).